The sequence spans 183 residues: Glutathione-regulated potassium-efflux system ancillary protein KefG (183 aa).

This sequence belongs to the NAD(P)H dehydrogenase (quinone) family. KefG subfamily. As to quaternary structure, interacts with KefB.

Its subcellular location is the cell inner membrane. The catalysed reaction is a quinone + NADH + H(+) = a quinol + NAD(+). It catalyses the reaction a quinone + NADPH + H(+) = a quinol + NADP(+). Regulatory subunit of a potassium efflux system that confers protection against electrophiles. Required for full activity of KefB. The protein is Glutathione-regulated potassium-efflux system ancillary protein KefG of Salmonella paratyphi C (strain RKS4594).